The primary structure comprises 260 residues: MATIKEIKEQLAAISDLLDPHWTEFEADARSGVQAAVRQRKKIIQADLDEEVRLENMLRYEKDLYLQGYQAIAGIDEVGRGPLAGPVVAACVILPKNCKIRHLNDSKKIPKKKHEEIYKQVVKVALAIGIGRISSEMIDQVNIYEATKMAMLQAIDDLQGLVSRPDYLLIDAMNLGISIPQSSIIKGDAHSLSIAAASIVAKVTRDRMMIGYDEIYPGYGFAQNVGYGTKQHLEGLETLGVTPIHRRTFEPIKSMLKEKN.

The region spanning 70–260 (QAIAGIDEVG…PIKSMLKEKN (191 aa)) is the RNase H type-2 domain. A divalent metal cation contacts are provided by Asp76, Glu77, and Asp171.

This sequence belongs to the RNase HII family. It depends on Mn(2+) as a cofactor. Mg(2+) is required as a cofactor.

Its subcellular location is the cytoplasm. It catalyses the reaction Endonucleolytic cleavage to 5'-phosphomonoester.. Endonuclease that specifically degrades the RNA of RNA-DNA hybrids. This Streptococcus mutans serotype c (strain ATCC 700610 / UA159) protein is Ribonuclease HII.